Reading from the N-terminus, the 597-residue chain is FERM domain-containing protein 3 (597 aa).

The FERM domain occupies Met-32–Lys-312. The disordered stretch occupies residues Ser-409–Ile-435. The span at Glu-423–Glu-432 shows a compositional bias: acidic residues. The helical transmembrane segment at Leu-531 to Glu-551 threads the bilayer.

The protein localises to the membrane. In terms of biological role, putative tumor suppressor gene that may be implicated in the origin and progression of lung cancer. In Pongo abelii (Sumatran orangutan), this protein is FERM domain-containing protein 3 (FRMD3).